The primary structure comprises 300 residues: Light-independent protochlorophyllide reductase iron-sulfur ATP-binding protein (300 aa).

ATP-binding positions include G43–T48 and K72. S47 provides a ligand contact to Mg(2+). [4Fe-4S] cluster is bound by residues C128 and C162. ATP is bound at residue N213–R214.

Belongs to the NifH/BchL/ChlL family. In terms of assembly, homodimer. Protochlorophyllide reductase is composed of three subunits; ChlL, ChlN and ChlB. The cofactor is [4Fe-4S] cluster.

The enzyme catalyses chlorophyllide a + oxidized 2[4Fe-4S]-[ferredoxin] + 2 ADP + 2 phosphate = protochlorophyllide a + reduced 2[4Fe-4S]-[ferredoxin] + 2 ATP + 2 H2O. It functions in the pathway porphyrin-containing compound metabolism; chlorophyll biosynthesis (light-independent). Functionally, component of the dark-operative protochlorophyllide reductase (DPOR) that uses Mg-ATP and reduced ferredoxin to reduce ring D of protochlorophyllide (Pchlide) to form chlorophyllide a (Chlide). This reaction is light-independent. The L component serves as a unique electron donor to the NB-component of the complex, and binds Mg-ATP. This is Light-independent protochlorophyllide reductase iron-sulfur ATP-binding protein from Synechococcus sp. (strain RCC307).